Consider the following 160-residue polypeptide: 2-amino-4-hydroxy-6-hydroxymethyldihydropteridine pyrophosphokinase (160 aa).

This sequence belongs to the HPPK family. As to quaternary structure, monomer.

The catalysed reaction is 6-hydroxymethyl-7,8-dihydropterin + ATP = (7,8-dihydropterin-6-yl)methyl diphosphate + AMP + H(+). It participates in cofactor biosynthesis; tetrahydrofolate biosynthesis; 2-amino-4-hydroxy-6-hydroxymethyl-7,8-dihydropteridine diphosphate from 7,8-dihydroneopterin triphosphate: step 4/4. Catalyzes the transfer of pyrophosphate from adenosine triphosphate (ATP) to 6-hydroxymethyl-7,8-dihydropterin, an enzymatic step in folate biosynthesis pathway. In Haemophilus influenzae (strain ATCC 51907 / DSM 11121 / KW20 / Rd), this protein is 2-amino-4-hydroxy-6-hydroxymethyldihydropteridine pyrophosphokinase (folK).